The primary structure comprises 505 residues: Lysine--tRNA ligase (505 aa).

Mg(2+) is bound by residues Glu415 and Glu422.

Belongs to the class-II aminoacyl-tRNA synthetase family. In terms of assembly, homodimer. The cofactor is Mg(2+).

The protein resides in the cytoplasm. The catalysed reaction is tRNA(Lys) + L-lysine + ATP = L-lysyl-tRNA(Lys) + AMP + diphosphate. The polypeptide is Lysine--tRNA ligase (Vibrio parahaemolyticus serotype O3:K6 (strain RIMD 2210633)).